A 247-amino-acid chain; its full sequence is Uridylate kinase (247 aa).

Position 17-20 (17-20 (KFSG)) interacts with ATP. A UMP-binding site is contributed by Gly-59. Positions 60 and 64 each coordinate ATP. UMP-binding positions include Asp-79 and 140-147 (TGNPFFTT). Residues Thr-167, Tyr-173, and Asp-176 each coordinate ATP.

Belongs to the UMP kinase family. In terms of assembly, homohexamer.

Its subcellular location is the cytoplasm. The catalysed reaction is UMP + ATP = UDP + ADP. It functions in the pathway pyrimidine metabolism; CTP biosynthesis via de novo pathway; UDP from UMP (UMPK route): step 1/1. With respect to regulation, inhibited by UTP. Functionally, catalyzes the reversible phosphorylation of UMP to UDP. This Legionella pneumophila subsp. pneumophila (strain Philadelphia 1 / ATCC 33152 / DSM 7513) protein is Uridylate kinase.